A 169-amino-acid polypeptide reads, in one-letter code: Der GTPase-activating protein YihI (169 aa).

Disordered regions lie at residues 1-100 and 144-169; these read MKPS…AELE and GLSY…LRGN. Residues 10-19 show a composition bias toward basic residues; sequence SKGHAKARRK. The segment covering 20–30 has biased composition (basic and acidic residues); the sequence is TREELDQEARD. Over residues 31-40 the composition is skewed to basic residues; that stretch reads RKRQKKRRGH. Residues 49-58 are compositionally biased toward polar residues; the sequence is GNTTSGSKGQ. Positions 147-159 are enriched in acidic residues; the sequence is YDDDEEEEEDEKQ. Residues 160 to 169 are compositionally biased toward basic and acidic residues; sequence EDMMRLLRGN.

This sequence belongs to the YihI family. Interacts with Der.

A GTPase-activating protein (GAP) that modifies Der/EngA GTPase function. May play a role in ribosome biogenesis. The sequence is that of Der GTPase-activating protein YihI from Escherichia coli O6:H1 (strain CFT073 / ATCC 700928 / UPEC).